A 431-amino-acid chain; its full sequence is UDP-N-acetylglucosamine 1-carboxyvinyltransferase (431 aa).

22-23 (KN) contributes to the phosphoenolpyruvate binding site. Arg92 is a UDP-N-acetyl-alpha-D-glucosamine binding site. Asp116 serves as the catalytic Proton donor. Residues 121–125 (RPIDQ), Asp307, and Ile330 each bind UDP-N-acetyl-alpha-D-glucosamine.

The protein belongs to the EPSP synthase family. MurA subfamily.

It localises to the cytoplasm. The catalysed reaction is phosphoenolpyruvate + UDP-N-acetyl-alpha-D-glucosamine = UDP-N-acetyl-3-O-(1-carboxyvinyl)-alpha-D-glucosamine + phosphate. The protein operates within cell wall biogenesis; peptidoglycan biosynthesis. Functionally, cell wall formation. Adds enolpyruvyl to UDP-N-acetylglucosamine. The polypeptide is UDP-N-acetylglucosamine 1-carboxyvinyltransferase (Lactobacillus acidophilus (strain ATCC 700396 / NCK56 / N2 / NCFM)).